A 240-amino-acid chain; its full sequence is Small ribosomal subunit protein uS3 (240 aa).

Positions 39 to 109 (IRQYVEKNLS…QIRINVVEVA (71 aa)) constitute a KH type-2 domain. Positions 214-240 (EEQAPAQPATTPKRQRRRQQFEDRSNE) are disordered.

The protein belongs to the universal ribosomal protein uS3 family. As to quaternary structure, part of the 30S ribosomal subunit. Forms a tight complex with proteins S10 and S14.

In terms of biological role, binds the lower part of the 30S subunit head. Binds mRNA in the 70S ribosome, positioning it for translation. This chain is Small ribosomal subunit protein uS3, found in Gloeothece citriformis (strain PCC 7424) (Cyanothece sp. (strain PCC 7424)).